The primary structure comprises 452 residues: UPF0210 protein Daud_1353 (452 aa).

The protein belongs to the UPF0210 family. Homodimer.

The sequence is that of UPF0210 protein Daud_1353 from Desulforudis audaxviator (strain MP104C).